A 284-amino-acid chain; its full sequence is Pantothenate synthetase (284 aa).

32–39 (MGALHEGH) provides a ligand contact to ATP. Residue H39 is the Proton donor of the active site. Q63 serves as a coordination point for (R)-pantoate. Q63 contacts beta-alanine. Residue 149–152 (GEKD) coordinates ATP. Position 155 (Q155) interacts with (R)-pantoate. ATP is bound by residues V178 and 186 to 189 (LSSR).

It belongs to the pantothenate synthetase family. Homodimer.

The protein localises to the cytoplasm. The enzyme catalyses (R)-pantoate + beta-alanine + ATP = (R)-pantothenate + AMP + diphosphate + H(+). The protein operates within cofactor biosynthesis; (R)-pantothenate biosynthesis; (R)-pantothenate from (R)-pantoate and beta-alanine: step 1/1. In terms of biological role, catalyzes the condensation of pantoate with beta-alanine in an ATP-dependent reaction via a pantoyl-adenylate intermediate. The chain is Pantothenate synthetase from Chelativorans sp. (strain BNC1).